The sequence spans 131 residues: Small ribosomal subunit protein uS8 (131 aa).

This sequence belongs to the universal ribosomal protein uS8 family. As to quaternary structure, part of the 30S ribosomal subunit. Contacts proteins S5 and S12.

Functionally, one of the primary rRNA binding proteins, it binds directly to 16S rRNA central domain where it helps coordinate assembly of the platform of the 30S subunit. The sequence is that of Small ribosomal subunit protein uS8 from Pelagibacter ubique (strain HTCC1062).